Reading from the N-terminus, the 861-residue chain is Leucine--tRNA ligase (861 aa).

The short motif at 42–52 is the 'HIGH' region element; it reads PYPSGRLHMGH. The 'KMSKS' region motif lies at 619-623; that stretch reads KMSKS. ATP is bound at residue Lys-622.

Belongs to the class-I aminoacyl-tRNA synthetase family.

Its subcellular location is the cytoplasm. It catalyses the reaction tRNA(Leu) + L-leucine + ATP = L-leucyl-tRNA(Leu) + AMP + diphosphate. In Haemophilus ducreyi (strain 35000HP / ATCC 700724), this protein is Leucine--tRNA ligase.